We begin with the raw amino-acid sequence, 178 residues long: Extracellular fatty acid-binding protein (178 aa).

Residues 1 to 20 (MRTLALSLGLALLCLLHAKA) form the signal peptide. Thr-43 provides a ligand contact to enterobactin. 2 residues coordinate 1-tetradecanoyl-sn-glycerol 3-phosphate: Tyr-72 and Lys-104. Cys-80 and Cys-173 are disulfide-bonded. Residues Lys-104, Arg-123, and Arg-134 each coordinate enterobactin. 134–136 (RLY) contributes to the 1-tetradecanoyl-sn-glycerol 3-phosphate binding site.

The protein belongs to the calycin superfamily. Lipocalin family. Monomer.

It localises to the secreted. Its function is as follows. Siderocalin-like lipocalin tightly binding a variety of bacterial ferric siderophores, also binds long-chain unsaturated fatty acids such as linoleic acid, oleic acid, arachidonic acid and, with a lower affinity, long chain saturated fatty acids such as steraic acid. May act as an antibacterial factor, through dual ligand specificity, both as a siderophore-sequestrating molecule and a lysophosphatidic acid (LPA) sensor. This is Extracellular fatty acid-binding protein from Coturnix japonica (Japanese quail).